Consider the following 332-residue polypeptide: CMRF35-like molecule 9 (332 aa).

Residues 1–18 (MRLLVLLWGCLLLPGYEA) form the signal peptide. The 103-residue stretch at 19–121 (LEGPEEISGF…RGPDESLLIS (103 aa)) folds into the Ig-like V-type domain. Topologically, residues 19 to 247 (LEGPEEISGF…KPRVSIPMVR (229 aa)) are extracellular. Cys-37 and Cys-107 are oxidised to a cystine. N-linked (GlcNAc...) asparagine glycosylation occurs at Asn-96. Thr-137, Thr-143, Thr-144, Thr-155, Thr-161, Thr-170, Thr-171, Thr-177, Thr-187, and Thr-195 each carry an O-linked (GalNAc...) threonine glycan. Residues 146–239 (LQPKAKAQQT…PALSSGSSKP (94 aa)) are disordered. Residues 147–158 (QPKAKAQQTQPP) show a composition bias toward low complexity. Over residues 168-181 (AATTAKQGKTGAEA) the composition is skewed to low complexity. Positions 186 to 205 (GTSQYGHERTSQYTGTSPHP) are enriched in polar residues. Ser-196 carries O-linked (GalNAc...) serine glycosylation. O-linked (GalNAc...) threonine glycosylation is found at Thr-199 and Thr-201. The O-linked (GalNAc...) serine glycan is linked to Ser-202. An O-linked (GalNAc...) threonine glycan is attached at Thr-207. Ser-208, Ser-213, Ser-214, and Ser-222 each carry an O-linked (GalNAc...) serine glycan. The segment covering 220–239 (LDSTSAEDTSPALSSGSSKP) has biased composition (polar residues). Thr-223 is a glycosylation site (O-linked (GalNAc...) threonine). A glycan (O-linked (GalNAc...) serine) is linked at Ser-224. O-linked (GalNAc...) threonine glycosylation occurs at Thr-228. 2 O-linked (GalNAc...) serine glycosylation sites follow: Ser-229 and Ser-237. The helical transmembrane segment at 248-268 (ILAPVLVLLSLLSAAGLIAFC) threads the bilayer. Over 269–332 (SHLLLWRKEA…ELGFSKFVSA (64 aa)) the chain is Cytoplasmic.

The protein belongs to the CD300 family. Post-translationally, O-glycosylated with sialylated oligosaccharides. As to expression, highly expressed in heart, skeletal muscle and placenta.

The protein resides in the apical cell membrane. It localises to the basolateral cell membrane. It is found in the endosome. The protein localises to the multivesicular body membrane. Receptor which may mediate L-selectin-dependent lymphocyte rollings. Binds SELL in a calcium dependent manner. Binds lymphocyte. This is CMRF35-like molecule 9 (CD300LG) from Homo sapiens (Human).